A 288-amino-acid polypeptide reads, in one-letter code: POU domain class 2-associating factor 2 (288 aa).

The OCA domain maps to 10–32; the sequence is KRVYQGVRVKHTVKDLLAEKRSG. Disordered regions lie at residues 24 to 52 and 247 to 274; these read DLLA…PFVQ and PPKV…VKED. The span at 35–48 shows a compositional bias: low complexity; sequence SNSRLNGSVSSSQS.

Belongs to the POU2AF family. As to quaternary structure, interacts with POU2F3 (via the POU domain) in a DNA-dependent manner; this interaction recruits POU2AF2 to chromatin and increases POU2F3 transactivation activity. In terms of tissue distribution, expressed in tuft cells of colon mucosa, as well as in small intestine and thymus.

The protein resides in the cytoplasm. It localises to the cytosol. The protein localises to the nucleus. In terms of biological role, transcriptional coactivator of POU2F3. This complex drives the development of tuft cells, a rare chemosensory cells that coordinate immune and neural functions within mucosal epithelial tissues. This is POU domain class 2-associating factor 2 from Homo sapiens (Human).